The primary structure comprises 357 residues: UDP-xylose transporter 3 (357 aa).

Transmembrane regions (helical) follow at residues 7-27 (FQLG…SIVI), 31-51 (ALIS…HLLV), 75-95 (VMGF…SLGF), 100-120 (FYQM…TLFF), 132-152 (LTIL…LNML), 154-174 (SVLS…TNTI), 194-214 (AITL…QNVF), 224-244 (FFIV…FLVI), 250-270 (VTYQ…GYVL), and 280-300 (ILGI…CSIE). S334 carries the phosphoserine modification.

Belongs to the TPT transporter family. TPT (TC 2.A.7.9) subfamily. Ubiquitous.

The protein localises to the golgi apparatus membrane. Functionally, nucleotide-sugar transporter that transports UDP-xylose and UMP in a strict counter-exchange mode. This chain is UDP-xylose transporter 3, found in Arabidopsis thaliana (Mouse-ear cress).